We begin with the raw amino-acid sequence, 62 residues long: Large ribosomal subunit protein eL24 (62 aa).

Cysteine 6, cysteine 9, cysteine 32, and cysteine 36 together coordinate Zn(2+). A C4-type zinc finger spans residues 6–36 (CSFCGADIPPGYGIMYVRSDGTVQRFCSRKC).

This sequence belongs to the eukaryotic ribosomal protein eL24 family. As to quaternary structure, part of the 50S ribosomal subunit. Forms a cluster with proteins L3 and L14. Requires Zn(2+) as cofactor.

In terms of biological role, binds to the 23S rRNA. This Pyrobaculum calidifontis (strain DSM 21063 / JCM 11548 / VA1) protein is Large ribosomal subunit protein eL24.